A 545-amino-acid chain; its full sequence is Glucose-6-phosphate isomerase (545 aa).

Residue E351 is the Proton donor of the active site. Catalysis depends on residues H382 and K510.

Belongs to the GPI family.

It is found in the cytoplasm. The catalysed reaction is alpha-D-glucose 6-phosphate = beta-D-fructose 6-phosphate. The protein operates within carbohydrate biosynthesis; gluconeogenesis. It functions in the pathway carbohydrate degradation; glycolysis; D-glyceraldehyde 3-phosphate and glycerone phosphate from D-glucose: step 2/4. Functionally, catalyzes the reversible isomerization of glucose-6-phosphate to fructose-6-phosphate. This chain is Glucose-6-phosphate isomerase, found in Helicobacter acinonychis (strain Sheeba).